A 331-amino-acid chain; its full sequence is Beta-ketoacyl-[acyl-carrier-protein] synthase III (331 aa).

Residues C115 and H255 contribute to the active site. The ACP-binding stretch occupies residues Q256–R260. N285 is an active-site residue.

This sequence belongs to the thiolase-like superfamily. FabH family. As to quaternary structure, homodimer.

It localises to the cytoplasm. It carries out the reaction malonyl-[ACP] + acetyl-CoA + H(+) = 3-oxobutanoyl-[ACP] + CO2 + CoA. The protein operates within lipid metabolism; fatty acid biosynthesis. Catalyzes the condensation reaction of fatty acid synthesis by the addition to an acyl acceptor of two carbons from malonyl-ACP. Catalyzes the first condensation reaction which initiates fatty acid synthesis and may therefore play a role in governing the total rate of fatty acid production. Possesses both acetoacetyl-ACP synthase and acetyl transacylase activities. Its substrate specificity determines the biosynthesis of branched-chain and/or straight-chain of fatty acids. The polypeptide is Beta-ketoacyl-[acyl-carrier-protein] synthase III (Helicobacter pylori (strain ATCC 700392 / 26695) (Campylobacter pylori)).